A 331-amino-acid polypeptide reads, in one-letter code: 6-phosphogluconolactonase (331 aa).

The protein belongs to the cycloisomerase 2 family.

It carries out the reaction 6-phospho-D-glucono-1,5-lactone + H2O = 6-phospho-D-gluconate + H(+). Its pathway is carbohydrate degradation; pentose phosphate pathway; D-ribulose 5-phosphate from D-glucose 6-phosphate (oxidative stage): step 2/3. Its function is as follows. Catalyzes the hydrolysis of 6-phosphogluconolactone to 6-phosphogluconate. The polypeptide is 6-phosphogluconolactonase (Citrobacter koseri (strain ATCC BAA-895 / CDC 4225-83 / SGSC4696)).